The sequence spans 69 residues: Fungal defensin oryzeasin (69 aa).

Residues 1-18 (MKLLTVAFSLLLLGQVHA) form the signal peptide. A propeptide spanning residues 19–26 (SPLVLDKR) is cleaved from the precursor. 3 disulfides stabilise this stretch: Cys-29–Cys-60, Cys-44–Cys-66, and Cys-48–Cys-68.

This sequence belongs to the invertebrate defensin family.

The protein localises to the secreted. The protein resides in the target cell membrane. In terms of biological role, shows antibacterial activity against numerous Gram-positive bacteria. It selectively inhibits peptidoglycan biosynthesis through complex formation with the cell wall precursor lipid II (1:1 molar ratio) thus inhibiting cell wall synthesis. In Aspergillus oryzae (strain ATCC 42149 / RIB 40) (Yellow koji mold), this protein is Fungal defensin oryzeasin.